A 201-amino-acid chain; its full sequence is Zinc finger protein 239 (201 aa).

C2H2-type zinc fingers lie at residues 6–28 (YKCDKCGKGFTRSSSLLVHHSVH), 34–56 (FKCDRCGKGFSQSSKLHIHKRVH), 62–84 (YACEECGMSFSQRSNLHIHQRVH), 90–112 (YKCGECGKGFSQSSNLHIHRCTH), 118–140 (YQCYECGKGFSQSSDLRIHLRVH), 146–168 (YHCGKCGQGFSQSSKLLIHQRVH), and 174–196 (YECSKCGKGFSQSSNLHIHQRVH).

Belongs to the krueppel C2H2-type zinc-finger protein family. As to expression, preferentially expressed in transformed mouse cells.

The protein resides in the nucleus. In terms of biological role, may be involved in transcriptional regulation. The protein is Zinc finger protein 239 (Znf239) of Mus musculus (Mouse).